The following is a 65-amino-acid chain: Large ribosomal subunit protein bL35 (65 aa).

The segment at 1-46 (MPKIKTNRGAAKRFKPTGSGGFKRAQSHRRHILTKKSTKRKRHLRS) is disordered. Over residues 25-45 (AQSHRRHILTKKSTKRKRHLR) the composition is skewed to basic residues.

The protein belongs to the bacterial ribosomal protein bL35 family.

This is Large ribosomal subunit protein bL35 from Thioalkalivibrio sulfidiphilus (strain HL-EbGR7).